The following is a 368-amino-acid chain: Quinolinate synthase (368 aa).

2 residues coordinate iminosuccinate: H46 and S63. C110 lines the [4Fe-4S] cluster pocket. Iminosuccinate is bound by residues Y141 to N143 and S162. Residue C230 participates in [4Fe-4S] cluster binding. Iminosuccinate contacts are provided by residues H256–E258 and T273. Position 320 (C320) interacts with [4Fe-4S] cluster.

Belongs to the quinolinate synthase family. Type 3 subfamily. [4Fe-4S] cluster is required as a cofactor.

It localises to the cytoplasm. It carries out the reaction iminosuccinate + dihydroxyacetone phosphate = quinolinate + phosphate + 2 H2O + H(+). It functions in the pathway cofactor biosynthesis; NAD(+) biosynthesis; quinolinate from iminoaspartate: step 1/1. Its function is as follows. Catalyzes the condensation of iminoaspartate with dihydroxyacetone phosphate to form quinolinate. The sequence is that of Quinolinate synthase from Bacillus cereus (strain G9842).